A 264-amino-acid polypeptide reads, in one-letter code: ATP synthase subunit a (264 aa).

The next 5 helical transmembrane spans lie at 39–59 (LDTL…FYII), 97–117 (VAPL…MDLV), 139–159 (TADP…VVFY), 205–225 (LFGN…LPWW), and 239–259 (LLVI…YISL).

Belongs to the ATPase A chain family. In terms of assembly, F-type ATPases have 2 components, CF(1) - the catalytic core - and CF(0) - the membrane proton channel. CF(1) has five subunits: alpha(3), beta(3), gamma(1), delta(1), epsilon(1). CF(0) has three main subunits: a(1), b(2) and c(9-12). The alpha and beta chains form an alternating ring which encloses part of the gamma chain. CF(1) is attached to CF(0) by a central stalk formed by the gamma and epsilon chains, while a peripheral stalk is formed by the delta and b chains.

The protein resides in the cell inner membrane. Its function is as follows. Key component of the proton channel; it plays a direct role in the translocation of protons across the membrane. The protein is ATP synthase subunit a of Coxiella burnetii (strain CbuG_Q212) (Coxiella burnetii (strain Q212)).